Reading from the N-terminus, the 378-residue chain is Erythronate-4-phosphate dehydrogenase (378 aa).

Substrate-binding residues include Ser45 and Thr66. NAD(+) contacts are provided by Asp146 and Thr175. Arg208 is a catalytic residue. Position 232 (Asp232) interacts with NAD(+). The active site involves Glu237. Residue His254 is the Proton donor of the active site. NAD(+) is bound at residue Gly257. Tyr258 serves as a coordination point for substrate.

It belongs to the D-isomer specific 2-hydroxyacid dehydrogenase family. PdxB subfamily. Homodimer.

It is found in the cytoplasm. It carries out the reaction 4-phospho-D-erythronate + NAD(+) = (R)-3-hydroxy-2-oxo-4-phosphooxybutanoate + NADH + H(+). The protein operates within cofactor biosynthesis; pyridoxine 5'-phosphate biosynthesis; pyridoxine 5'-phosphate from D-erythrose 4-phosphate: step 2/5. Its function is as follows. Catalyzes the oxidation of erythronate-4-phosphate to 3-hydroxy-2-oxo-4-phosphonooxybutanoate. This chain is Erythronate-4-phosphate dehydrogenase, found in Escherichia coli O6:K15:H31 (strain 536 / UPEC).